Reading from the N-terminus, the 478-residue chain is Alcohol dehydrogenase (quinone), cytochrome c subunit (478 aa).

An N-terminal signal peptide occupies residues 1 to 36 (MLNALTRDRLVSEMKQGWKLAAAIGLMAVSFGAAHA). Residue glutamine 37 is modified to Pyrrolidone carboxylic acid. Cytochrome c domains lie at 42–145 (ALIK…MHGV), 189–304 (PEVA…KSMP), and 327–417 (GQGN…RKGW). The heme c site is built by cysteine 56, cysteine 59, histidine 60, cysteine 204, cysteine 207, histidine 208, cysteine 340, cysteine 343, and histidine 344.

In terms of assembly, the alcohol dehydrogenase multicomponent enzyme system is composed of a dehydrogenase subunit I (AdhA), a cytochrome c subunit II (AdhB) and a subunit III (AdhS). It depends on heme c as a cofactor.

Its subcellular location is the cell membrane. The catalysed reaction is ethanol + a ubiquinone = a ubiquinol + acetaldehyde. Its activity is regulated as follows. 2,6-dichloro-4-dicyanovinylphenol (PC16) and antimycin A inhibit ubiquinol oxidation activity more selectively than the ubiquinone reductase activity. Its function is as follows. Cytochrome c component of the alcohol dehydrogenase multicomponent enzyme system which is involved in the production of acetic acid and in the ethanol oxidase respiratory chain. Quinohemoprotein alcohol dehydrogenase (ADH) catalyzes the oxidation of ethanol to acetaldehyde by transferring electrons to the ubiquinone embedded in the membrane phospholipids. The electrons transfer from ethanol to membranous ubiquinone occurs from pyrroloquinoline quinone (PQQ) to one heme c in subunit I (AdhA), and finally to two heme c in subunit II (AdhB). Besides ubiquinone reduction, ADH also has a ubiquinol (QH2) oxidation reaction which mediates electron transfer from ubiquinol to the non-energy generating bypass oxidase system. The electrons transfer occurs from ubiquinol (QH2) to the additional heme c within subunit II (AdhB). Also able to use quinone analogs such as 2,3-dimethoxy-5-methyl-6-n-decyl-1,4-benzoquinone (DB) and 2,3-dimethoxy-5-methyl-6-n-pentyl-1,4-benzoquinone (PB). The sequence is that of Alcohol dehydrogenase (quinone), cytochrome c subunit from Gluconobacter oxydans (strain 621H) (Gluconobacter suboxydans).